Here is a 252-residue protein sequence, read N- to C-terminus: MYVVVLSLGDPVSRTFLELVPEMPLVETRGEIEVRKFGEWPAVVHKGEPTDFNREDLLLSLGKYAIFISRHEMANPRPMFTVHTPGSWPDVSVANPPLATAIFRALCRHAEEPFKCAFEATHHPPNTSAASATFVEVGSTEAEWRDRRAVGVLVQALEEVLGRELGAGATTMVVGDLHYSTVADSALNGEVELGHILPKYLETTLQHVKTAFYKHTTPVRRVVVFRKNVKNPARAEVVEFLREREVEVVLKG.

It belongs to the DtdA deacylase family. As to quaternary structure, monomer. Zn(2+) serves as cofactor.

The enzyme catalyses a D-aminoacyl-tRNA + H2O = a tRNA + a D-alpha-amino acid + H(+). It carries out the reaction glycyl-tRNA(Ala) + H2O = tRNA(Ala) + glycine + H(+). D-aminoacyl-tRNA deacylase with broad substrate specificity. By recycling D-aminoacyl-tRNA to D-amino acids and free tRNA molecules, this enzyme counteracts the toxicity associated with the formation of D-aminoacyl-tRNA entities in vivo. In Pyrobaculum neutrophilum (strain DSM 2338 / JCM 9278 / NBRC 100436 / V24Sta) (Thermoproteus neutrophilus), this protein is D-aminoacyl-tRNA deacylase.